An 85-amino-acid polypeptide reads, in one-letter code: MNYLVFFSLALLVMTGVESVRDGYIADDKNCAYFCGRNAYCDDECKKNGAESGYCQWAGVYGNACWCYKLPDKVPIRVPGKCNGG.

The first 19 residues, 1–19, serve as a signal peptide directing secretion; the sequence is MNYLVFFSLALLVMTGVES. Residues 21 to 83 enclose the LCN-type CS-alpha/beta domain; sequence RDGYIADDKN…VPIRVPGKCN (63 aa). Cystine bridges form between Cys-31/Cys-82, Cys-35/Cys-55, Cys-41/Cys-65, and Cys-45/Cys-67.

Belongs to the long (4 C-C) scorpion toxin superfamily. Sodium channel inhibitor family. Alpha subfamily. Expressed by the venom gland.

It is found in the secreted. Functionally, alpha toxins bind voltage-independently at site-3 of sodium channels (Nav) and inhibit the inactivation of the activated channels, thereby blocking neuronal transmission. In Olivierus martensii (Manchurian scorpion), this protein is Toxin BmKaTX15.